The following is a 285-amino-acid chain: Bifunctional protein FolD 2 (285 aa).

NADP(+)-binding positions include 164–166 (GRS), Ser-189, and Val-230.

Belongs to the tetrahydrofolate dehydrogenase/cyclohydrolase family. Homodimer.

The catalysed reaction is (6R)-5,10-methylene-5,6,7,8-tetrahydrofolate + NADP(+) = (6R)-5,10-methenyltetrahydrofolate + NADPH. It carries out the reaction (6R)-5,10-methenyltetrahydrofolate + H2O = (6R)-10-formyltetrahydrofolate + H(+). Its pathway is one-carbon metabolism; tetrahydrofolate interconversion. In terms of biological role, catalyzes the oxidation of 5,10-methylenetetrahydrofolate to 5,10-methenyltetrahydrofolate and then the hydrolysis of 5,10-methenyltetrahydrofolate to 10-formyltetrahydrofolate. This Geobacter metallireducens (strain ATCC 53774 / DSM 7210 / GS-15) protein is Bifunctional protein FolD 2.